The primary structure comprises 245 residues: Thiamine phosphate phosphatase-like protein (245 aa).

Catalysis depends on aspartate 9, which acts as the Nucleophile. Aspartate 9, aspartate 11, and aspartate 179 together coordinate Mg(2+). The active-site Proton donor is the aspartate 11.

The protein belongs to the HAD-like hydrolase superfamily. Monomer. Mg(2+) is required as a cofactor.

It catalyses the reaction thiamine phosphate + H2O = thiamine + phosphate. Functionally, HAD-like hydrolase that has a thiamine monophosphate phosphatase activity in a heterologous system. Does not contribute to thiamine monophosphate phosphatase activity in planta. This is Thiamine phosphate phosphatase-like protein from Arabidopsis thaliana (Mouse-ear cress).